Reading from the N-terminus, the 71-residue chain is Ubiquinol-cytochrome c reductase complex assembly factor 6 (71 aa).

Residues 1-8 (MPAGVPMS) lie on the Mitochondrial matrix side of the membrane. The helical; Signal-anchor for type II membrane protein transmembrane segment at 9–25 (TYLKMFAASLLAMCAGA) threads the bilayer. The Mitochondrial intermembrane portion of the chain corresponds to 26-71 (EVVHRYYRPDLTIPEIPPKRGELKTELLGLKERKHKPQVSQQEELK).

The protein belongs to the UQCC6 family. Interacts with UQCRC1. Interacts with UQCRQ. Interacts with UQCC5. Forms a complex, named COMB/coordinator of mitochondrial CYTB biogenesis, composed of UQCC1, UQCC2, UQCC4, UQCC5 and UQCC6; stabilizes nascent cytochrome b/MT-CYB and promotes its membrane insertion. Forms a complex, named COMA, composed of UQCC1, UQCC2 and UQCC4; activates MT-CYB translation. Forms a complex, named COMC, composed of UQCC1, UQCC2; UQCC3 and UQCC4; mediates MT-CYB hemylation and association with the first nuclear-encoded complex III subunit UQCRQ. Interacts with MT-CYB. Cardiac and skeletal muscle (at protein level).

The protein resides in the mitochondrion inner membrane. Required for the assembly and stability of the mitochondrial ubiquinol-cytochrome c reductase complex (complex III (CIII) or cytochrome b-c1 complex), a multisubunit transmembrane complex that is part of the mitochondrial electron transport chain (ETC) which drives oxidative phosphorylation. Mediates early complex III biogenesis. Participates in regulating the levels of electron transport chain proteins, and therefore energy supply, in response to changes in energy demand. Also required for cytochrome c oxidase complex (complex IV) assembly. The polypeptide is Ubiquinol-cytochrome c reductase complex assembly factor 6 (Homo sapiens (Human)).